A 1992-amino-acid chain; its full sequence is Fer-1-like protein 4 (1992 aa).

C2 domains lie at 1-97, 214-330, and 369-502; these read MALT…VLRE, PRGD…QKWA, and TSSD…AGFN. Residues 1–1952 are Extracellular-facing; it reads MALTVCVRHL…PLKTFIFFIW (1952 aa). Disordered regions lie at residues 554–606, 661–686, and 691–710; these read RVEP…APEI, AGRQEEQSGQGSRADEGSESSTLEVQ, and SEDRGAGQEEQELLGTPAQW. The segment covering 559-569 has biased composition (polar residues); sequence PSQTTQRSGLS. Positions 572-581 are enriched in basic residues; it reads TGKKKKKKEK. C2 domains follow at residues 951–1078 and 1126–1250; these read PSSG…ELQF and ISGH…PQEE. 2 disordered regions span residues 1245-1276 and 1322-1361; these read EDPQEEEETEEETRDLVPHGPQGEKSLPEAGT and FQGQPSSDDEMDEAGDADGTHLISGDREAQEQGETDSKVS. Acidic residues-rich tracts occupy residues 1247–1257 and 1328–1337; these read PQEEEETEEET and SDDEMDEAGD. 2 consecutive C2 domains span residues 1430–1549 and 1675–1824; these read SFSE…ANCG and VPAP…EHCS. 8 residues coordinate Ca(2+): D1464, D1470, D1519, D1521, D1527, D1795, S1798, and D1801. Positions 1862–1885 are disordered; that stretch reads EAREAQAGKKRKRKRRAGRPEDLE. The span at 1869–1878 shows a compositional bias: basic residues; the sequence is GKKRKRKRRA. The helical transmembrane segment at 1953–1973 threads the bilayer; it reads RRYWRILVLLLLALITIFLLL. Residues 1974–1992 lie on the Cytoplasmic side of the membrane; the sequence is VFYTIPGQISEVIFSPVHK.

The cofactor is Ca(2+).

It localises to the membrane. In Mus musculus (Mouse), this protein is Fer-1-like protein 4 (Fer1l4).